Consider the following 123-residue polypeptide: NADH-quinone oxidoreductase subunit A (123 aa).

The next 3 helical transmembrane spans lie at 11-31 (YLPI…IMIL), 64-84 (ICFY…AFLV), and 93-113 (IGKI…IGFI).

Belongs to the complex I subunit 3 family. As to quaternary structure, NDH-1 is composed of 14 different subunits. Subunits NuoA, H, J, K, L, M, N constitute the membrane sector of the complex.

Its subcellular location is the cell inner membrane. The enzyme catalyses a quinone + NADH + 5 H(+)(in) = a quinol + NAD(+) + 4 H(+)(out). Its function is as follows. NDH-1 shuttles electrons from NADH, via FMN and iron-sulfur (Fe-S) centers, to quinones in the respiratory chain. The immediate electron acceptor for the enzyme in this species is believed to be ubiquinone. Couples the redox reaction to proton translocation (for every two electrons transferred, four hydrogen ions are translocated across the cytoplasmic membrane), and thus conserves the redox energy in a proton gradient. In Rickettsia conorii (strain ATCC VR-613 / Malish 7), this protein is NADH-quinone oxidoreductase subunit A.